A 64-amino-acid polypeptide reads, in one-letter code: Small ribosomal subunit protein bS21 (64 aa).

The protein belongs to the bacterial ribosomal protein bS21 family.

This chain is Small ribosomal subunit protein bS21, found in Pelagibacter ubique (strain HTCC1062).